The sequence spans 460 residues: NADH-ubiquinone oxidoreductase chain 4 (460 aa).

A run of 13 helical transmembrane segments spans residues 20–42, 61–81, 94–113, 117–139, 148–168, 195–215, 225–245, 258–278, 285–304, 308–330, 351–371, 394–414, and 436–456; these read AKWLWTTSIAQSLVIALASLSWL, PLSTPLLVLTCWLLPLMVLAS, RTYISLLVSLQMFLILAFGA, IMFYIMFEATLLPTLIIITRWGN, TYFLFYTLAGSLPLLVALLLL, LWWAACLLAFLVKMPVYGVHL, PIAGSMILAAVLLKLGGYGMM, LAYPFIVLALWGIIMTGSICL, SLIAYSSVGHMGLVAGGILI, WGFTGAIILMIAHGLASSALFCL, MILPLMTTWWFVASLANLALP, LLLTGLGTLITASYSLYLFLM, and LLITLHLIPIILLILKPELMW.

This sequence belongs to the complex I subunit 4 family.

It is found in the mitochondrion membrane. It catalyses the reaction a ubiquinone + NADH + 5 H(+)(in) = a ubiquinol + NAD(+) + 4 H(+)(out). Its function is as follows. Core subunit of the mitochondrial membrane respiratory chain NADH dehydrogenase (Complex I) that is believed to belong to the minimal assembly required for catalysis. Complex I functions in the transfer of electrons from NADH to the respiratory chain. The immediate electron acceptor for the enzyme is believed to be ubiquinone. The chain is NADH-ubiquinone oxidoreductase chain 4 (MT-ND4) from Salmo salar (Atlantic salmon).